We begin with the raw amino-acid sequence, 235 residues long: NAD(P)H-hydrate epimerase (235 aa).

Residues 18–221 (AAQIDEQLFT…SLVDEHELLM (204 aa)) enclose the YjeF N-terminal domain. Position 65–69 (65–69 (NNGGD)) interacts with (6S)-NADPHX. 2 residues coordinate K(+): Asn-66 and Asp-127. (6S)-NADPHX contacts are provided by residues 131–137 (GFSFHPP) and Asp-160. Ser-163 is a K(+) binding site.

This sequence belongs to the NnrE/AIBP family. K(+) is required as a cofactor.

The enzyme catalyses (6R)-NADHX = (6S)-NADHX. The catalysed reaction is (6R)-NADPHX = (6S)-NADPHX. Catalyzes the epimerization of the S- and R-forms of NAD(P)HX, a damaged form of NAD(P)H that is a result of enzymatic or heat-dependent hydration. This is a prerequisite for the S-specific NAD(P)H-hydrate dehydratase to allow the repair of both epimers of NAD(P)HX. The protein is NAD(P)H-hydrate epimerase of Caenorhabditis elegans.